Reading from the N-terminus, the 217-residue chain is Large ribosomal subunit protein uL29m (217 aa).

It belongs to the universal ribosomal protein uL29 family. In terms of assembly, component of the mitochondrial large ribosomal subunit. Mature mitochondrial ribosomes consist of a small (37S) and a large (54S) subunit. The 37S subunit contains at least 33 different proteins and 1 molecule of RNA (15S). The 54S subunit contains at least 45 different proteins and 1 molecule of RNA (21S).

It localises to the mitochondrion. This chain is Large ribosomal subunit protein uL29m (mrpl4), found in Aspergillus clavatus (strain ATCC 1007 / CBS 513.65 / DSM 816 / NCTC 3887 / NRRL 1 / QM 1276 / 107).